The sequence spans 645 residues: Protein LHY (645 aa).

Ser6 carries the post-translational modification Phosphoserine. One can recognise an HTH myb-type domain in the interval 19-73 (TITKQRERWTEDEHERFLEALRLYGRAWQRIEEHIGTKTAVQIRSHAQKFFTKLE). A DNA-binding region (H-T-H motif) is located at residues 46-69 (WQRIEEHIGTKTAVQIRSHAQKFF). 4 disordered regions span residues 89 to 127 (IEIP…AKLV), 149 to 212 (EKTS…GTTV), 410 to 437 (QNLA…ADSK), and 458 to 500 (AQKK…TDEN). Residues 110-120 (NNGTSSSQVSS) show a composition bias toward polar residues. Basic and acidic residues predominate over residues 149–158 (EKTSTGKENQ). Positions 159–169 (DENCSGVSTVN) are enriched in polar residues. Over residues 197–207 (VPKKNKDKDGN) the composition is skewed to basic and acidic residues. The segment covering 468-478 (SCGSNTPSGSD) has biased composition (polar residues). The segment covering 483-498 (ALDKMEKDKEDVKETD) has biased composition (basic and acidic residues).

Homodimer or heterodimer with CCA1. Interacts with CCA1 (via internal domain); independently of photoperiod. Functions probably as part of a large complex. Interacts with CKB1 and CKB3. Interacts with LNK1 and LNK2. Phosphorylated by CK2. Expressed in leaves, roots, stems, flowers and siliques.

The protein localises to the nucleus. Functionally, transcription factor involved in the circadian clock. Binds to the promoter region of APRR1/TOC1 and TCP21/CHE to repress their transcription. Represses both CCA1 and itself. May recognize the promoter of JMJ14 to regulates its expression during the night in a circadian manner. This Arabidopsis thaliana (Mouse-ear cress) protein is Protein LHY.